Here is a 638-residue protein sequence, read N- to C-terminus: 1-deoxy-D-xylulose-5-phosphate synthase (638 aa).

Residues H79 and 120-122 (AHS) each bind thiamine diphosphate. D151 contributes to the Mg(2+) binding site. Thiamine diphosphate contacts are provided by residues 152–153 (GA), N180, Y289, and E371. Residue N180 participates in Mg(2+) binding.

The protein belongs to the transketolase family. DXPS subfamily. As to quaternary structure, homodimer. Mg(2+) is required as a cofactor. Thiamine diphosphate serves as cofactor.

It carries out the reaction D-glyceraldehyde 3-phosphate + pyruvate + H(+) = 1-deoxy-D-xylulose 5-phosphate + CO2. The protein operates within metabolic intermediate biosynthesis; 1-deoxy-D-xylulose 5-phosphate biosynthesis; 1-deoxy-D-xylulose 5-phosphate from D-glyceraldehyde 3-phosphate and pyruvate: step 1/1. In terms of biological role, catalyzes the acyloin condensation reaction between C atoms 2 and 3 of pyruvate and glyceraldehyde 3-phosphate to yield 1-deoxy-D-xylulose-5-phosphate (DXP). This Rhizobium leguminosarum bv. trifolii (strain WSM2304) protein is 1-deoxy-D-xylulose-5-phosphate synthase.